Here is a 525-residue protein sequence, read N- to C-terminus: Neuropilin and tolloid-like protein 2 (525 aa).

Positions 1-22 (MALEQLCAVLKVLLITVLVVEG) are cleaved as a signal peptide. The Extracellular portion of the chain corresponds to 23–347 (IAVAQKTQDG…GLFEQITKTH (325 aa)). Disulfide bonds link C45-C72, C100-C122, C177-C207, C234-C256, C297-C309, C304-C322, and C316-C331. CUB domains follow at residues 45–159 (CGIW…YSFI) and 177–292 (CQFE…FTSF). The 37-residue stretch at 296–332 (PCTSSTFFCHSNMCINNSLVCNGVQNCAYPWDENHCK) folds into the LDL-receptor class A domain. N311 carries N-linked (GlcNAc...) asparagine glycosylation. The helical transmembrane segment at 348–368 (GTIIGITSGIVLVLLIISILV) threads the bilayer. The Cytoplasmic portion of the chain corresponds to 369 to 525 (QVKQPRKKVM…SAQASISIDF (157 aa)). S409 carries the post-translational modification Phosphoserine.

As to quaternary structure, interacts with GRIK2 and GRIK3, but neither with AMPA-nor with NMDA-sensitive glutamate receptors. N-glycosylated. Expressed in brain tissues, including cerebellar granule cells (at protein level).

It localises to the cell membrane. Functionally, accessory subunit of neuronal kainate-sensitive glutamate receptors, GRIK2 and GRIK3. Increases kainate-receptor channel activity, slowing the decay kinetics of the receptors, without affecting their expression at the cell surface, and increasing the open probability of the receptor channels. Modulates the agonist sensitivity of kainate receptors. Slows the decay of kainate receptor-mediated excitatory postsynaptic currents (EPSCs), thus directly influencing synaptic transmission. The polypeptide is Neuropilin and tolloid-like protein 2 (Neto2) (Mus musculus (Mouse)).